The chain runs to 714 residues: Polyribonucleotide nucleotidyltransferase (714 aa).

Mg(2+) is bound by residues Asp-488 and Asp-494. Residues 555-614 form the KH domain; that stretch reads PRIEVMNIPTDKIRDVIGSGGKVIREIVEKTGAKINIEDDGTVKIASSNGKEIEAAKKWI. An S1 motif domain is found at 624 to 692; it reads GEIYEGTVVK…ERGKVRLSMK (69 aa).

Belongs to the polyribonucleotide nucleotidyltransferase family. Mg(2+) serves as cofactor.

It is found in the cytoplasm. It carries out the reaction RNA(n+1) + phosphate = RNA(n) + a ribonucleoside 5'-diphosphate. Functionally, involved in mRNA degradation. Catalyzes the phosphorolysis of single-stranded polyribonucleotides processively in the 3'- to 5'-direction. The sequence is that of Polyribonucleotide nucleotidyltransferase from Brucella abortus biovar 1 (strain 9-941).